A 371-amino-acid polypeptide reads, in one-letter code: Chitin deacetylase (371 aa).

Positions 1-20 are cleaved as a signal peptide; sequence MLCRLFTLFITAALACCVAA. The tract at residues 73-112 is disordered; that stretch reads PKPEPEPTAVPTMAPEPTTVPPTEPSGTYPPETTPTVEPT. Low complexity-rich tracts occupy residues 79–89 and 102–112; these read PTAVPTMAPEP and PPETTPTVEPT. Cys164 and Cys358 are oxidised to a cystine. An N-linked (GlcNAc...) asparagine glycan is attached at Asn167. A NodB homology domain is found at 168 to 353; the sequence is GTIALTFDDG…EIKKRGLRAV (186 aa). Residue Asp175 is the Proton acceptor of the active site. Asp175 lines the acetate pocket. Residues Asp176, His228, and His232 each contribute to the Co(2+) site. N-linked (GlcNAc...) asparagine glycosylation is present at Asn239. Tyr270 lines the acetate pocket. His327 acts as the Proton donor in catalysis.

The protein belongs to the polysaccharide deacetylase family. It depends on Co(2+) as a cofactor.

The catalysed reaction is [(1-&gt;4)-N-acetyl-beta-D-glucosaminyl](n) + n H2O = chitosan + n acetate. In terms of biological role, hydrolyzes the N-acetamido groups of N-acetyl-D-glucosamine residues in chitin to form chitosan and acetate. The protein is Chitin deacetylase of Arthroderma benhamiae (strain ATCC MYA-4681 / CBS 112371) (Trichophyton mentagrophytes).